Reading from the N-terminus, the 63-residue chain is uncharacterized protein (63 aa).

This is an uncharacterized protein from Bacillus subtilis (strain 168).